Here is a 213-residue protein sequence, read N- to C-terminus: FMN-dependent NADH:quinone oxidoreductase (213 aa).

FMN is bound at residue serine 10.

The protein belongs to the azoreductase type 1 family. In terms of assembly, homodimer. The cofactor is FMN.

The enzyme catalyses 2 a quinone + NADH + H(+) = 2 a 1,4-benzosemiquinone + NAD(+). It carries out the reaction N,N-dimethyl-1,4-phenylenediamine + anthranilate + 2 NAD(+) = 2-(4-dimethylaminophenyl)diazenylbenzoate + 2 NADH + 2 H(+). Quinone reductase that provides resistance to thiol-specific stress caused by electrophilic quinones. Functionally, also exhibits azoreductase activity. Catalyzes the reductive cleavage of the azo bond in aromatic azo compounds to the corresponding amines. The chain is FMN-dependent NADH:quinone oxidoreductase from Opitutus terrae (strain DSM 11246 / JCM 15787 / PB90-1).